The following is a 2380-amino-acid chain: MSQKWNENKKNKDEKDENDKYVGFKNYEKEGWLLNMQPGSSKDGLDIEKASLELFFIQDDATSFRVWIPYNPYFYIYVKEGHQSEVESYLKSTYEKDIAGIDIMDKEDLDLENHLSGLKRKYLKIRFHNVSTLLSVRNDLFPIIKRNKQKSNTSEAYEDESLNKILNSYYNKGNNNNNNHQNYNNNNNQNNNNFNKELNKDDNNNNNSKLNKQATEYILDIREYDVPYYVRAAIDLNIRVGLWYTVIKNGRLTTVNELTTRVDRPDPKVLAYDIETTKLPLKFPDSSIDSIMMISYMLDKQGYLIVNREIVSEDIKDFEYTPKPEYYGPFTVFNEPDEKSVLERFFSEIKREKPHIFVSYNGDMFDWPFVESRAEYHGLSMFHQIGFRNDNGEYRSKINPHMDAFCWVKRDSYLPHGSHGLKAVTREKLRYDPLELDPELMLKSAQEDPETLANYSVSDAVATYYLYMNYVHPFIFSLCTIIPMNPDDVLRKGSGTLCEALLMTQAFKADVIFPNKHKDDINSMYKGHLLESETYVGGHVECLESGVFRSDIPTNFSLDPASIEKHMGNIDQVLKFALKEGGIPLDTVSNYQEVKEDVLKKFTLLKENPKQQSHPLIYHLDVSAMYPNIILTNKLQPTAVVNDEVCATCVYNKPESQCQRTLDWQWRGDYSPSNQSEYRLILQQLESEKFGDGDERKSFLSLSEEKRNELLRKRLKEYSRKVYRKTHQITQEIRSDTICMRENSFYVDTVRLFRDRRYVFKNHHRDWKIKYDQAMQESGGTNSVAVVAAQGMVVLYESLQLAHKCILNSFYGYVMRKGARWYSMQMAGIVTHTGSNIIKEAREVVEQMGRPLEIDTDGIWCILPSHFPENYTLKSASTGKKVTFSYICEMLNEKVAKSFTNHQYQDYNAETNTYTIRDECSILFECDGPYRCMLIPTSKEKDVKLKKRYAVFNREGRICELKGFEIKRRGELKLIKLFQSEVFKEFLGGDSLEGCYQSVGAVANRWLDILDSHAENYEEKDLIELITESSNMSRKLEEYGTQKSSAISTAKKLAEFLGDDMIKDKGLSCQYIISNKPAGSPITERALPVAIFDADFETRCHYLRRWTKSPSGDLDIRELIDWDYYRQRLSGVIQKIITIPAALQNVTNPVPRVIHPDWILKEIRRNEDGRQQTSITSFFEKTEDNDQDNDNDNDNDNDNDNDNSKPQQTDDIENMFSSRFKDLPAFNPKVTKFKRSKQSSSDVSSLLIKKSKSSIETFTNEQEKQIMETKTPSIDKDFQGWLSISKKKWKIQRLLKKRRQRLGGSLFDSDSFRIGSKLTNRESSSSSFFKSQSDIIKKGYWNIISIEPIYGGEPGIYQMWSLIEDQLIPIKVDIGRVFYLNSIDTDPYEDAQKNTNVIPPRGKQRFNVFSVTMSESQFLEQSKELNTLFTNPMIEGVYETKVPLDIKAIIQCGCVATLSRVSPFFTKIVNSNTRFSLEDIASKPDKQFHYLAEHNFNQLFLYHNSRDGKDGYFVLFNMNTQQCSVIFSNPYMAANKIDARVLNSIKEKLPEITFTMDQKSSMSLAKKEIGSLIMEYQRKGLPTIILLQVPNAIGILEQIPILREFPRVPVPYHDNDSMYSPFNWDVHSLKPLPLRLMDAPKLWVYYANMSRYANIPIGNIPTDNASFMCDILYARSLVEQKHLLWMSDSNFPDLGGSEEDDAKFYEELNNVEINNSDCYNQVCFELDIENLATNTILESIHLAEIEGILGNELGDESNVAMFDDIKNTSNNSNTKNGANQNTTNDTTSSFDKLSITNKFRSAINHQISGCEKEFNILRNLVSKWKLDLVSGSNSKRNEISSRYSNYLLLHFYRWISSTNSKLYDPILYRTLHQLMKKVFIQLIFEFKKLGSKIVYANFNKIIICSQKDSIEDARSYCNYILAVIKKKELFSWINFKQTNYYHNLLWLNNSNYSGILYFNPLINKNQQQQQQQQDNADDDDDDDVSENEEEQQQNKNKKLKKIKNGKIITNWNIAEFLPPQIQTSFIIIISDYIYKLHTERDELNRIQKEQQQRYLLKQKISTTSSSSNNDSTAATTTTTKDTINEPTKPDLRKSSTWNEEEDEDISIPPSSSSSTTTTTSKTKKATSKFDLLIDVNRIFTLLDHFQVNQSSLEFPQLPGGYLKLNNPPLEFIKFVCHVLSIDKSISSRVSRLRMKLMTSMKVREFSDEAKFKDPCVSFTLPDVICSSCHSCRDIDLLRNTNTTSISSRLSSQQKSNNNDSDDSDDDNEENEGDDDNIIRVPELSCIQCKGHYSKNTIESQLVEIIQRRSLSYQLQDLRCSKCNDVKSDNLGDICPQCSGQWECTQSNNLFSKDLIIFKSIAEYHNFEWLGETVDSLSKFI.

The span at 169–196 (YYNKGNNNNNNHQNYNNNNNQNNNNFNK) shows a compositional bias: low complexity. Disordered regions lie at residues 169–209 (YYNK…NNSK), 1178–1210 (FFEKTEDNDQDNDNDNDNDNDNDNDNSKPQQTD), 1766–1787 (KNTSNNSNTKNGANQNTTNDTT), 1967–1998 (QQQQQQQDNADDDDDDDVSENEEEQQQNKNKK), and 2059–2120 (KIST…TTTS). The segment covering 1183–1201 (EDNDQDNDNDNDNDNDNDN) has biased composition (acidic residues). Low complexity predominate over residues 1767–1776 (NTSNNSNTKN). The span at 1777 to 1787 (GANQNTTNDTT) shows a compositional bias: polar residues. Over residues 1975-1991 (NADDDDDDDVSENEEEQ) the composition is skewed to acidic residues. 2 stretches are compositionally biased toward low complexity: residues 2059–2081 (KISTTSSSSNNDSTAATTTTTKD) and 2110–2120 (SSSSSTTTTTS). Zn(2+)-binding residues include cysteine 2225 and cysteine 2228. A CysA-type zinc finger spans residues 2225-2288 (CSSCHSCRDI…RVPELSCIQC (64 aa)). Positions 2245 to 2258 (ISSRLSSQQKSNNN) are enriched in low complexity. Residues 2245 to 2275 (ISSRLSSQQKSNNNDSDDSDDDNEENEGDDD) form a disordered region. Acidic residues predominate over residues 2259–2275 (DSDDSDDDNEENEGDDD). Residues cysteine 2285 and cysteine 2288 each contribute to the Zn(2+) site. Residues cysteine 2319, cysteine 2322, cysteine 2334, and cysteine 2337 each coordinate [4Fe-4S] cluster. A CysB motif motif is present at residues 2319-2337 (CSKCNDVKSDNLGDICPQC).

It belongs to the DNA polymerase type-B family. In terms of assembly, consists of three subunits: pole, pole2 and pole3. The cofactor is [4Fe-4S] cluster.

The protein resides in the nucleus. The catalysed reaction is DNA(n) + a 2'-deoxyribonucleoside 5'-triphosphate = DNA(n+1) + diphosphate. Functionally, DNA polymerase II participates in chromosomal DNA replication. In Dictyostelium discoideum (Social amoeba), this protein is DNA polymerase epsilon catalytic subunit A (pole).